Here is a 177-residue protein sequence, read N- to C-terminus: Nucleoside triphosphate/diphosphate phosphatase (177 aa).

The active-site Proton donor is the arginine 23. Positions 87, 103, 105, 107, 120, and 123 each coordinate Mg(2+).

Belongs to the Ntdp family. The cofactor is Mg(2+).

The enzyme catalyses a ribonucleoside 5'-triphosphate + H2O = a ribonucleoside 5'-diphosphate + phosphate + H(+). It carries out the reaction a ribonucleoside 5'-diphosphate + H2O = a ribonucleoside 5'-phosphate + phosphate + H(+). In terms of biological role, has nucleoside phosphatase activity towards nucleoside triphosphates and nucleoside diphosphates. The sequence is that of Nucleoside triphosphate/diphosphate phosphatase from Streptococcus thermophilus (strain ATCC BAA-491 / LMD-9).